The following is a 143-amino-acid chain: Class II hydrophobin qid3 (143 aa).

The signal sequence occupies residues 1 to 17 (MKFLTVAAVFFTAVLAA). Over residues 20-37 (NYPPPPPPTYAPPPPTYT) the composition is skewed to pro residues. A disordered region spans residues 20 to 67 (NYPPPPPPTYAPPPPTYTLPPNGNGGGNGNGNGNGNGGGNGNGNGNTN). 10 consecutive repeat copies span residues 41–42 (NG), 43–44 (NG), 47–48 (NG), 49–50 (NG), 51–52 (NG), 53–54 (NG), 55–56 (NG), 59–60 (NG), 61–62 (NG), and 63–64 (NG). Residues 41–64 (NGNGGGNGNGNGNGNGGGNGNGNG) form a 10 X 2 AA repeats of N-G region. A compositionally biased stretch (gly residues) spans 42–63 (GNGGGNGNGNGNGNGGGNGNGN). Cystine bridges form between cysteine 74/cysteine 124, cysteine 85/cysteine 97, and cysteine 125/cysteine 136.

It belongs to the cerato-ulmin hydrophobin family. As to quaternary structure, homotetramer. Further self-assembles to form highly ordered films at water-air interfaces through intermolecular interactions.

The protein resides in the secreted. The protein localises to the cell wall. Its function is as follows. Aerial growth, conidiation, and dispersal of filamentous fungi in the environment rely upon a capability of their secreting small amphipathic proteins called hydrophobins (HPBs) with low sequence identity. Class I can self-assemble into an outermost layer of rodlet bundles on aerial cell surfaces, conferring cellular hydrophobicity that supports fungal growth, development and dispersal; whereas Class II form highly ordered films at water-air interfaces through intermolecular interactions but contribute nothing to the rodlet structure. Qid3 is a class II hydrophobin that might acts as a chitinase inhibitor at the cell surface that blocks the degradation of the chitin rings localized in the budding region of dividing cells. The protein is Class II hydrophobin qid3 of Trichoderma harzianum (Hypocrea lixii).